We begin with the raw amino-acid sequence, 388 residues long: Succinate--CoA ligase [ADP-forming] subunit beta (388 aa).

In terms of domain architecture, ATP-grasp spans 9–244 (KEILRKFGVA…LDEEDPAEIE (236 aa)). ATP contacts are provided by residues Lys-46, 53-55 (GRG), Glu-99, Ala-102, and Glu-107. Residues Asn-199 and Asp-213 each contribute to the Mg(2+) site. Substrate-binding positions include Asn-264 and 321-323 (GIM).

The protein belongs to the succinate/malate CoA ligase beta subunit family. As to quaternary structure, heterotetramer of two alpha and two beta subunits. Mg(2+) is required as a cofactor.

The catalysed reaction is succinate + ATP + CoA = succinyl-CoA + ADP + phosphate. It carries out the reaction GTP + succinate + CoA = succinyl-CoA + GDP + phosphate. It functions in the pathway carbohydrate metabolism; tricarboxylic acid cycle; succinate from succinyl-CoA (ligase route): step 1/1. Succinyl-CoA synthetase functions in the citric acid cycle (TCA), coupling the hydrolysis of succinyl-CoA to the synthesis of either ATP or GTP and thus represents the only step of substrate-level phosphorylation in the TCA. The beta subunit provides nucleotide specificity of the enzyme and binds the substrate succinate, while the binding sites for coenzyme A and phosphate are found in the alpha subunit. The chain is Succinate--CoA ligase [ADP-forming] subunit beta from Burkholderia lata (strain ATCC 17760 / DSM 23089 / LMG 22485 / NCIMB 9086 / R18194 / 383).